The primary structure comprises 2282 residues: Cation channel sperm-associated targeting subunit tau (2282 aa).

Residues 1-118 (MELPPPGNRR…RGKGKGTGTR (118 aa)) form a disordered region. 2 stretches are compositionally biased toward polar residues: residues 11 to 41 (VSIN…SLKR) and 50 to 87 (MMSN…NLSS). The span at 90–109 (YADEEGKPLTDKNKDKDKGR) shows a compositional bias: basic and acidic residues. The C2 domain occupies 131–266 (QSDEMAIANQ…IQKGCFTEVM (136 aa)). 10 disordered regions span residues 397–416 (MTKR…SSAL), 656–679 (EHED…TWAE), 747–1066 (NKLI…SHDP), 1104–1153 (SAKS…DKQS), 1217–1240 (YTND…TDDR), 1426–1445 (NSLL…DSRS), 1452–1515 (RQNT…SLDK), 1542–1569 (ERRQ…LEKT), 1908–1928 (NQAN…LKKQ), and 2187–2222 (PKKS…EPNK). Composition is skewed to polar residues over residues 750-760 (ITDSSFNTTKP), 783-792 (SDPSSNTTKP), 800-841 (DPSS…SDLN), 849-858 (IVSTISSDPN), and 953-974 (SARS…TKLS). Residues 1104 to 1123 (SAKSLDSNNSSASSSPTVNS) are compositionally biased toward low complexity. Residues 1124-1136 (DTTTNAAEPSGTK) are compositionally biased toward polar residues. 2 stretches are compositionally biased toward polar residues: residues 1452 to 1466 (RQNT…SSVS) and 1473 to 1482 (DCQSISTQES). Over residues 1484–1493 (YPVRDTKSDS) the composition is skewed to basic and acidic residues. Over residues 1495–1504 (NDTEEMELDS) the composition is skewed to acidic residues. Basic and acidic residues-rich tracts occupy residues 1542–1555 (ERRQ…ESLI) and 1916–1925 (SPERPSDISL).

Component of the CatSper complex or CatSpermasome composed of the core pore-forming members CATSPER1, CATSPER2, CATSPER3 and CATSPER4 as well as auxiliary members CATSPERB, CATSPERG, CATSPERD, CATSPERE, CATSPERZ, C2CD6/CATSPERT, SLCO6C1, TMEM249, TMEM262 and EFCAB9. HSPA1 may be an additional auxiliary complex member. The core complex members CATSPER1, CATSPER2, CATSPER3 and CATSPER4 form a heterotetrameric channel. The auxiliary CATSPERB, CATSPERG, CATSPERD and CATSPERE subunits form a pavilion-like structure over the pore which stabilizes the complex through interactions with CATSPER4, CATSPER3, CATSPER1 and CATSPER2 respectively. SLCO6C1 interacts with CATSPERE and TMEM262/CATSPERH interacts with CATSPERB, further stabilizing the complex. C2CD6/CATSPERT interacts at least with CATSPERD and is required for targeting the CatSper complex in the flagellar membrane. Expressed in cauda sperm (at protein level).

Its subcellular location is the cell projection. The protein localises to the cilium. It localises to the flagellum membrane. Auxiliary component of the CatSper complex, a complex involved in sperm cell hyperactivation. Sperm cell hyperactivation is needed for sperm motility which is essential late in the preparation of sperm for fertilization. Required for CatSper complex targeting and trafficking into the quadrilinear nanodomains. Targets the preassembled CatSper complexes to elongating flagella, where it links the channel-carrying vesicles and motor proteins. The chain is Cation channel sperm-associated targeting subunit tau from Mus musculus (Mouse).